A 282-amino-acid polypeptide reads, in one-letter code: Shikimate dehydrogenase (NADP(+)) (282 aa).

Residues Ser15–Ser17 and Thr62 each bind shikimate. Residue Lys66 is the Proton acceptor of the active site. Shikimate is bound by residues Asn87 and Asp103. NADP(+) is bound by residues Gly127 to Ala131, Asn151 to Lys156, and Met220. Tyr222 serves as a coordination point for shikimate. Gly244 lines the NADP(+) pocket.

It belongs to the shikimate dehydrogenase family. Homodimer.

It carries out the reaction shikimate + NADP(+) = 3-dehydroshikimate + NADPH + H(+). It participates in metabolic intermediate biosynthesis; chorismate biosynthesis; chorismate from D-erythrose 4-phosphate and phosphoenolpyruvate: step 4/7. Its function is as follows. Involved in the biosynthesis of the chorismate, which leads to the biosynthesis of aromatic amino acids. Catalyzes the reversible NADPH linked reduction of 3-dehydroshikimate (DHSA) to yield shikimate (SA). The protein is Shikimate dehydrogenase (NADP(+)) of Shewanella putrefaciens (strain CN-32 / ATCC BAA-453).